A 247-amino-acid chain; its full sequence is MENVRAYGAGLAGANFDKNTFFKKPTVLFRCAALLFGLILWYSVSKGGWHKPSDAIHPVCLYGRSSSTCSFATAVGFFAVCGAIVLIVLDAKMDQISSVPTRRRAVLADLVVSAIFTAIFLIGFFTFWSKLSAFEVDEDDENPIKTNNAKFGILSALLSFLAWGGAAFFAWRRYEEGNQATHEPNYDEHFGQVSTDVQDGYGYGGDSTGIGHVGAPPPQSSYQSGAAPQTMQQPPSNPYTQSEGYGY.

The region spanning 21–175 (FFKKPTVLFR…AAFFAWRRYE (155 aa)) is the MARVEL domain. Helical transmembrane passes span 25 to 45 (PTVL…YSVS), 69 to 89 (CSFA…LIVL), 105 to 125 (AVLA…IGFF), and 151 to 171 (FGIL…FFAW). A disordered region spans residues 206–247 (DSTGIGHVGAPPPQSSYQSGAAPQTMQQPPSNPYTQSEGYGY). Residues 220–247 (SSYQSGAAPQTMQQPPSNPYTQSEGYGY) show a composition bias toward polar residues.

This sequence belongs to the synaptogyrin family. In terms of tissue distribution, expressed in a wide variety of neurons and is expressed weakly in the non-neuronal distal tip cells. A punctate pattern was observed in the ventral and dorsal nerve cords and the nerve ring. Weak expression is seen in neuronal cell bodies and commissures.

It is found in the membrane. This chain is Synaptogyrin homolog 1 (sng-1), found in Caenorhabditis elegans.